Here is a 246-residue protein sequence, read N- to C-terminus: Endonuclease V (246 aa).

2 residues coordinate Mg(2+): D50 and D120.

Belongs to the endonuclease V family. The cofactor is Mg(2+).

The protein localises to the cytoplasm. It catalyses the reaction Endonucleolytic cleavage at apurinic or apyrimidinic sites to products with a 5'-phosphate.. Functionally, DNA repair enzyme involved in the repair of deaminated bases. Selectively cleaves double-stranded DNA at the second phosphodiester bond 3' to a deoxyinosine leaving behind the intact lesion on the nicked DNA. This chain is Endonuclease V, found in Gloeobacter violaceus (strain ATCC 29082 / PCC 7421).